The sequence spans 314 residues: Methionyl-tRNA formyltransferase (314 aa).

113–116 (SLLP) contacts (6S)-5,6,7,8-tetrahydrofolate.

This sequence belongs to the Fmt family.

It carries out the reaction L-methionyl-tRNA(fMet) + (6R)-10-formyltetrahydrofolate = N-formyl-L-methionyl-tRNA(fMet) + (6S)-5,6,7,8-tetrahydrofolate + H(+). Functionally, attaches a formyl group to the free amino group of methionyl-tRNA(fMet). The formyl group appears to play a dual role in the initiator identity of N-formylmethionyl-tRNA by promoting its recognition by IF2 and preventing the misappropriation of this tRNA by the elongation apparatus. This is Methionyl-tRNA formyltransferase from Stutzerimonas stutzeri (strain A1501) (Pseudomonas stutzeri).